A 555-amino-acid chain; its full sequence is MERYEVLEQIGKGSFGSALLVRHKQERKKYVLKKIRLARQSDRARRSAHQEMELISTVRNPFVVEYKDSWVEKGCYVCIVIGYCQGGDMTDTIKRACGVHFPEEKLCQWLVQLLMALDYLHSNHILHRDVKCSNIFLTKEQDIRLGDFGLAKILTSDDLTSSVVGTPSYMCPELLADIPYGSKSDIWSLGCCMYEMAAHKPPFKASDVQTLITKIHKLIMDPIPAMYSGSFRGLIKSMLRKNPELRPSANELLNHPHLQPYISMVYMKLESPRRSTFPLQFSERDATLKERRRSSFSNDRRLNPSVSDTEAGSVSSSGKASPTPMFNGRKVSEVTVGVVREEIVPQRQEEAKKQSGAARTPRVAGTSAKASTQRTVFKHELMKVSNPTERRRRVSLPLVVENPYTYESDITALCSLNSPDVSVNTPRFDKIAEFPEDIFQNQNRETASRREVARHSFSSPPCPPHGEDNSNGSITKDKCTVQKRSVSEVKQRRFDTSSYQQRAEALEGLLEFSAKLLQQERYDELGVLLKPFGAERVSSRETAIWLTKSFKEASV.

The 255-residue stretch at 4 to 258 folds into the Protein kinase domain; sequence YEVLEQIGKG…ANELLNHPHL (255 aa). Residues 10-18 and lysine 33 each bind ATP; that span reads IGKGSFGSA. Catalysis depends on aspartate 129, which acts as the Proton acceptor. Disordered stretches follow at residues 288 to 328, 346 to 372, and 443 to 477; these read LKER…MFNG, QRQEEAKKQSGAARTPRVAGTSAKAST, and NRETASRREVARHSFSSPPCPPHGEDNSNGSITKD. Residues 304–320 show a composition bias toward polar residues; that stretch reads PSVSDTEAGSVSSSGKA.

The protein belongs to the protein kinase superfamily. NEK Ser/Thr protein kinase family. NIMA subfamily.

The catalysed reaction is L-seryl-[protein] + ATP = O-phospho-L-seryl-[protein] + ADP + H(+). It catalyses the reaction L-threonyl-[protein] + ATP = O-phospho-L-threonyl-[protein] + ADP + H(+). Functionally, may be involved in plant development processes. In Arabidopsis thaliana (Mouse-ear cress), this protein is Serine/threonine-protein kinase Nek4 (NEK4).